Here is a 334-residue protein sequence, read N- to C-terminus: Leukocyte cell-derived chemotaxin 1 (334 aa).

The chain crosses the membrane as a helical span at residues 45-65 (VVLISGAVLLLFGAIGAFYFW). The 98-residue stretch at 104 to 201 (GSGAEEAIAV…LCGDLPIFWL (98 aa)) folds into the BRICHOS domain. Cys131 and Cys193 form a disulfide bridge. A propeptide spanning residues 211 to 214 (RERR) is cleaved from the precursor. Residues 218–268 (RKIVPTTTKRPHSGPRSNPGAGRLNNETRPSVQEDSQAFNPDNPYHQQEGE) form a disordered region. Over residues 242–257 (NNETRPSVQEDSQAFN) the composition is skewed to polar residues. A glycan (N-linked (GlcNAc...) asparagine) is linked at Asn243. 4 cysteine pairs are disulfide-bonded: Cys282/Cys286, Cys283/Cys323, Cys293/Cys317, and Cys297/Cys313.

This sequence belongs to the chondromodulin-1 family. Post-translationally, after cleavage, the post-translationally modified ChM-I is secreted as a glycoprotein. Detected in cartilage and cardiac valves (at protein level). Detected in the laminae fibrosa, spongiosa and ventricularis layers of normal cardiac valves (at protein level). Expression is decreased cardiac valves of patients with valvular heart disease (at protein level). Weakly expressed in chondrosarcoma.

It is found in the secreted. It localises to the extracellular space. Its subcellular location is the extracellular matrix. The protein localises to the endomembrane system. Its function is as follows. Bifunctional growth regulator that stimulates the growth of cultured chondrocytes in the presence of basic fibroblast growth factor (FGF) but inhibits the growth of cultured vascular endothelial cells. May contribute to the rapid growth of cartilage and vascular invasion prior to the replacement of cartilage by bone during endochondral bone development. Inhibits in vitro tube formation and mobilization of endothelial cells. Plays a role as antiangiogenic factor in cardiac valves to suppress neovascularization. The chain is Leukocyte cell-derived chemotaxin 1 from Homo sapiens (Human).